We begin with the raw amino-acid sequence, 486 residues long: Cysteine--tRNA ligase (486 aa).

A Zn(2+)-binding site is contributed by Cys-27. Positions Pro-29–Asn-39 match the 'HIGH' region motif. The Zn(2+) site is built by Cys-207, His-232, and Glu-236. A 'KMSKS' region motif is present at residues Lys-264–Ser-268. Lys-267 is an ATP binding site.

This sequence belongs to the class-I aminoacyl-tRNA synthetase family. As to quaternary structure, monomer. Zn(2+) serves as cofactor.

It is found in the cytoplasm. The catalysed reaction is tRNA(Cys) + L-cysteine + ATP = L-cysteinyl-tRNA(Cys) + AMP + diphosphate. The protein is Cysteine--tRNA ligase of Desulforamulus reducens (strain ATCC BAA-1160 / DSM 100696 / MI-1) (Desulfotomaculum reducens).